The chain runs to 155 residues: Small ribosomal subunit protein uS7cz/uS7cy (155 aa).

The protein belongs to the universal ribosomal protein uS7 family. In terms of assembly, part of the 30S ribosomal subunit.

Its subcellular location is the plastid. The protein resides in the chloroplast. In terms of biological role, one of the primary rRNA binding proteins, it binds directly to 16S rRNA where it nucleates assembly of the head domain of the 30S subunit. The protein is Small ribosomal subunit protein uS7cz/uS7cy (rps7-A) of Crucihimalaya wallichii (Rock-cress).